Reading from the N-terminus, the 117-residue chain is Prefoldin subunit beta (117 aa).

The protein belongs to the prefoldin subunit beta family. Heterohexamer of two alpha and four beta subunits.

The protein resides in the cytoplasm. Its function is as follows. Molecular chaperone capable of stabilizing a range of proteins. Seems to fulfill an ATP-independent, HSP70-like function in archaeal de novo protein folding. This Methanosarcina barkeri (strain Fusaro / DSM 804) protein is Prefoldin subunit beta.